The chain runs to 127 residues: Aspartate 1-decarboxylase (127 aa).

Catalysis depends on Ser25, which acts as the Schiff-base intermediate with substrate; via pyruvic acid. Ser25 carries the pyruvic acid (Ser) modification. Thr57 lines the substrate pocket. The active-site Proton donor is the Tyr58. 73–75 is a binding site for substrate; it reads GAA.

It belongs to the PanD family. In terms of assembly, heterooctamer of four alpha and four beta subunits. It depends on pyruvate as a cofactor. Post-translationally, is synthesized initially as an inactive proenzyme, which is activated by self-cleavage at a specific serine bond to produce a beta-subunit with a hydroxyl group at its C-terminus and an alpha-subunit with a pyruvoyl group at its N-terminus.

It is found in the cytoplasm. The enzyme catalyses L-aspartate + H(+) = beta-alanine + CO2. Its pathway is cofactor biosynthesis; (R)-pantothenate biosynthesis; beta-alanine from L-aspartate: step 1/1. Catalyzes the pyruvoyl-dependent decarboxylation of aspartate to produce beta-alanine. The polypeptide is Aspartate 1-decarboxylase (Bacillus cereus (strain B4264)).